Consider the following 61-residue polypeptide: Conotoxin LiC32 (61 aa).

A signal peptide spans 1–22 (MRCVPVFIILLLLSPSAPSVDA). A propeptide spanning residues 23 to 44 (HPKTKDDVPLASFHDDAKRTLQ) is cleaved from the precursor. C60 bears the Cysteine amide mark.

This sequence belongs to the conotoxin T superfamily. Contains 2 disulfide bonds that can be either 'C1-C3, C2-C4' or 'C1-C4, C2-C3', since these disulfide connectivities have been observed for conotoxins with cysteine framework V (for examples, see AC P0DQQ7 and AC P81755). In terms of tissue distribution, expressed by the venom duct.

It localises to the secreted. Has the ability to interact with the G-protein coupled somatostatin type 3 receptor (SSTR3). The ability was measured in competition binding experiments and the constant of inhibition (Ki) has been evaluated to be 3.5 uM. The polypeptide is Conotoxin LiC32 (Conus lividus (Livid cone)).